Here is a 313-residue protein sequence, read N- to C-terminus: Putative olfactory receptor 2B3 (313 aa).

Over 1–25 (MNWENESSPKEFILLGFSDRAWLQM) the chain is Extracellular. An N-linked (GlcNAc...) asparagine glycan is attached at Asn5. A helical transmembrane segment spans residues 26-49 (PLFVVLLISYTITIFGNVSIMMVC). The Cytoplasmic portion of the chain corresponds to 50–57 (ILDPKLHT). A helical transmembrane segment spans residues 58 to 79 (PMYFFLTNLSILDLCYTTTTVP). The Extracellular segment spans residues 80–100 (HMLVNIGCNKKTISYAGCVAH). Cysteines 97 and 189 form a disulfide. Residues 101 to 120 (LIIFLALGATECLLLAVMSF) traverse the membrane as a helical segment. The Cytoplasmic portion of the chain corresponds to 121-139 (DRYVAVCRPLHYVVIMNYW). Residues 140 to 158 (FCLRMAAFSWLIGFGNSVL) traverse the membrane as a helical segment. Residues 159 to 195 (QSSLTLNMPRCGHQEVDHFFCEVPALLKLSCADTKPI) lie on the Extracellular side of the membrane. A helical transmembrane segment spans residues 196–219 (EAELFFFSVLILLIPVTLILISYG). Residues 220–236 (FIAQAVLKIRSAEGRQK) lie on the Cytoplasmic side of the membrane. Residues 237–259 (AFGTCGSHMIVVSLFYGTAIYMY) form a helical membrane-spanning segment. Residues 260–272 (LQPPSSTSKDWGK) are Extracellular-facing. Residues 273–292 (MVSLFYGIITSMLNSLIYSL) traverse the membrane as a helical segment. At 293 to 313 (RNKDMKEAFKRLMPRIFFCKK) the chain is on the cytoplasmic side.

Belongs to the G-protein coupled receptor 1 family.

It is found in the cell membrane. Odorant receptor. This Homo sapiens (Human) protein is Putative olfactory receptor 2B3 (OR2B3).